A 283-amino-acid chain; its full sequence is Vitamin K epoxide reductase homolog (283 aa).

Residues 1-20 (MASYLKLKAQEETWLQRHSR) lie on the Cytoplasmic side of the membrane. The helical transmembrane segment at 21-41 (LILAILAGLGSLLTAYLTYTK) threads the bilayer. Residues 42-66 (LTEQPAAFCTGDGGCDLVLSSRWAE) lie on the Periplasmic side of the membrane. The cysteines at positions 50 and 56 are disulfide-linked. 59-65 (VLSSRWA) is a binding site for a quinone. A helical membrane pass occupies residues 67–87 (FLGIPTAAVGLLGFLGVLALA). At 88–102 (VLPDGLPLVKRWRWP) the chain is on the cytoplasmic side. Residues 103 to 123 (ALFGLVSAMTAFEMYMLYLMV) traverse the membrane as a helical segment. A quinone is bound at residue 111-122 (MTAFEMYMLYLM). Topologically, residues 124-128 (AVLRQ) are periplasmic. The helical transmembrane segment at 129–149 (FCMYCTTAIILVAGLGLVTVL) threads the bilayer. Residues Cys130 and Cys133 are joined by a disulfide bond. The Cytoplasmic segment spans residues 150–158 (GHRWLDGGK). Residues 159–179 (LAFSYILVAFLTLVTTIGVYA) form a helical membrane-spanning segment. At 180–283 (NQVPPPSPLA…ASGYPLEEGR (104 aa)) the chain is on the periplasmic side. The segment at 186-283 (SPLAVGLAAH…ASGYPLEEGR (98 aa)) is thioredoxin-like domain. Cystine bridges form between Cys209-Cys212 and Cys231-Cys244.

It belongs to the VKOR family.

The protein localises to the membrane. Its activity is regulated as follows. Inhibited by ferulenol. Its function is as follows. Thiol-disulfide oxidoreductase that catalyzes vitamin K-dependent disulfide bond formation in periplasmic target proteins. In Synechococcus sp. (strain JA-2-3B'a(2-13)) (Cyanobacteria bacterium Yellowstone B-Prime), this protein is Vitamin K epoxide reductase homolog.